The chain runs to 415 residues: Plant UBX domain-containing protein 16 (415 aa).

In terms of domain architecture, UBA spans Q19 to N69. Residues D333–T413 enclose the UBX domain.

This chain is Plant UBX domain-containing protein 16, found in Arabidopsis thaliana (Mouse-ear cress).